The primary structure comprises 344 residues: Arginine N-succinyltransferase (344 aa).

Leu-125 serves as a coordination point for succinyl-CoA. Catalysis depends on His-229, which acts as the Proton donor.

This sequence belongs to the arginine N-succinyltransferase family.

The enzyme catalyses succinyl-CoA + L-arginine = N(2)-succinyl-L-arginine + CoA + H(+). Its pathway is amino-acid degradation; L-arginine degradation via AST pathway; L-glutamate and succinate from L-arginine: step 1/5. In terms of biological role, catalyzes the transfer of succinyl-CoA to arginine to produce N(2)-succinylarginine. The protein is Arginine N-succinyltransferase of Shigella dysenteriae serotype 1 (strain Sd197).